The following is a 326-amino-acid chain: Probable cell division protein WhiA (326 aa).

A DNA-binding region (H-T-H motif) is located at residues 275-308 (SLEELGALADPPLTKDAIAGRIRRLLALADKRAR).

It belongs to the WhiA family.

Functionally, involved in cell division and chromosome segregation. The protein is Probable cell division protein WhiA of Salinispora arenicola (strain CNS-205).